A 350-amino-acid chain; its full sequence is Nicotinate-nucleotide--dimethylbenzimidazole phosphoribosyltransferase (350 aa).

The active-site Proton acceptor is the E317.

The protein belongs to the CobT family.

It catalyses the reaction 5,6-dimethylbenzimidazole + nicotinate beta-D-ribonucleotide = alpha-ribazole 5'-phosphate + nicotinate + H(+). Its pathway is nucleoside biosynthesis; alpha-ribazole biosynthesis; alpha-ribazole from 5,6-dimethylbenzimidazole: step 1/2. In terms of biological role, catalyzes the synthesis of alpha-ribazole-5'-phosphate from nicotinate mononucleotide (NAMN) and 5,6-dimethylbenzimidazole (DMB). The chain is Nicotinate-nucleotide--dimethylbenzimidazole phosphoribosyltransferase from Shewanella sp. (strain ANA-3).